A 481-amino-acid polypeptide reads, in one-letter code: uncharacterized protein (481 aa).

It belongs to the metallophosphoesterase superfamily.

This is an uncharacterized protein from Bacillus subtilis (strain 168).